The primary structure comprises 300 residues: Ribosomal protein bS6--L-glutamate ligase (300 aa).

An ATP-grasp domain is found at 104-287; the sequence is MQLLARQGID…IASKMIRWIE (184 aa). ATP-binding positions include K141, 178–179, D187, and 211–213; these read EY and RSN. Positions 248, 260, and 262 each coordinate Mg(2+). Mn(2+) is bound by residues D248, E260, and N262.

It belongs to the RimK family. Mg(2+) serves as cofactor. Mn(2+) is required as a cofactor.

In terms of biological role, an L-glutamate ligase that catalyzes the ATP-dependent post-translational addition of glutamate residues to the C-terminus of ribosomal protein bS6 (RpsF). Is also able to catalyze the synthesis of poly-alpha-glutamate in vitro, via ATP hydrolysis from unprotected glutamate as substrate. The number of glutamate residues added to either RpsF or to poly-alpha-glutamate changes with pH. This is Ribosomal protein bS6--L-glutamate ligase from Escherichia coli O81 (strain ED1a).